The following is a 214-amino-acid chain: Uracil phosphoribosyltransferase (214 aa).

5-phospho-alpha-D-ribose 1-diphosphate is bound by residues R107 and 135–143 (DPMLATGKT). Residues I198 and 203 to 205 (GDA) contribute to the uracil site. D204 serves as a coordination point for 5-phospho-alpha-D-ribose 1-diphosphate.

It belongs to the UPRTase family. The cofactor is Mg(2+).

The enzyme catalyses UMP + diphosphate = 5-phospho-alpha-D-ribose 1-diphosphate + uracil. It participates in pyrimidine metabolism; UMP biosynthesis via salvage pathway; UMP from uracil: step 1/1. Its activity is regulated as follows. Allosterically activated by GTP. Catalyzes the conversion of uracil and 5-phospho-alpha-D-ribose 1-diphosphate (PRPP) to UMP and diphosphate. This is Uracil phosphoribosyltransferase from Aeropyrum pernix (strain ATCC 700893 / DSM 11879 / JCM 9820 / NBRC 100138 / K1).